Consider the following 336-residue polypeptide: UDP-galactose transporter 1 (336 aa).

Transmembrane regions (helical) follow at residues 11–31 (LAIL…KWIF), 38–58 (FPLS…YIVI), 83–103 (FVFC…PVSF), 131–151 (IWAS…TELS), 154–174 (MFGF…TILA), 193–213 (APFA…SGIL), 227–247 (IIIL…FYVI), 254–274 (TFNV…WLIF), and 278–298 (ISYM…FYGY).

It belongs to the TPT transporter family. TPT (TC 2.A.7.9) subfamily.

It localises to the membrane. Its function is as follows. Nucleotide sugar transporter that specifically transports UDP-galactose. In Arabidopsis thaliana (Mouse-ear cress), this protein is UDP-galactose transporter 1.